Here is a 646-residue protein sequence, read N- to C-terminus: MTISTTALGGGATTATRKQVEAKYEEERQIQLQSRGMVEDIEITRNASFEQFAKDPWAAPKQVDVEIQRERLLQQAHHKIIIIGAGFGGLLFAVRLIQTGKFKADDIILVDSAAGFGGTWYWNRYPGLMCDTESYIYMPLLEETGYMPRNKYASGNEIREHAERIAEKYALSERAIFRTVVQSLDWEEEGKVWKIAGVKLGKNDECQQPFQLIADFPIMASGAFASPRVPNYPNIFDYKGKLFHTARWDYKYTGGSIENPKMSGLADKRVAIIGTGATAIQIVPQLAKNSRELFVFQRTPAAVDVRNNYPTDPARFKSEIQGDGPGWQRRRQINFNAFTCNEKTLPTDNKIGDGWTRMPSFSVLIGGPQSLEPDYIDQIRPIDMARQSEIRSRVHKLVESTAIADSLTPWYPGWCKRPCFHDEYLQSFNSSNVQLVDIRHDGISRFTPNGLVANGVEYELDAIILSTGYTVPVTRASPSGRANITVTGRRGVTMEEKWANGLATLHGVMTRDLPNLFFAGTSQAGACVNLTYALDQNAIHVAHILSEAVKRQPSDCTKLVIQPTHEGEEAWTMEILQRAAGFRGIAGCTPGYLNGYGMDASSLKPEEQMNMARLAAWGEGIASYVDALEGWRSEGQLEGVEMTFFA.

A glycan (N-linked (GlcNAc...) asparagine) is linked at asparagine 46. The helical transmembrane segment at 80–97 (IIIIGAGFGGLLFAVRLI) threads the bilayer. Residues 119 to 122 (TWYW), 131 to 132 (DT), and tyrosine 137 contribute to the FAD site. 129-131 (MCD) contacts NADP(+). Residues 275-281 (TGATAIQ) and 298-299 (RT) contribute to the NADP(+) site. Asparagine 429, asparagine 483, and asparagine 529 each carry an N-linked (GlcNAc...) asparagine glycan.

Belongs to the FAD-binding monooxygenase family. FAD is required as a cofactor.

It localises to the membrane. The enzyme catalyses preaustinoid A + AH2 + O2 = preaustinoid A1 + A + H2O. Its pathway is secondary metabolite biosynthesis; terpenoid biosynthesis. In terms of biological role, FAD-binding monooxygenase; part of the gene cluster that mediates the biosynthesis of paraherquonin, a meroterpenoid with a unique, highly congested hexacyclic molecular architecture. The first step of the pathway is the synthesis of 3,5-dimethylorsellinic acid (DMOA) by the polyketide synthase prhL. Synthesis of DMOA is followed by farnesylation by the prenyltransferase prhE, methylesterification by the methyl-transferase prhM, epoxidation of the prenyl chain by the flavin-dependent monooxygenase prhF, and cyclization of the farnesyl moiety by the terpene cyclase prhH, to yield the tetracyclic intermediate, protoaustinoid A. The short chain dehydrogenase prhI then oxidizes the C-3 alcohol group of the terpene cyclase product to transform protoaustinoid A into protoaustinoid B. The FAD-binding monooxygenase prhJ catalyzes the oxidation of protoaustinoid B into preaustinoid A which is further oxidized into preaustinoid A1 by FAD-binding monooxygenase phrK. Finally, prhA leads to berkeleydione via the berkeleyone B intermediate. PrhA is a multifunctional dioxygenase that first desaturates at C5-C6 to form berkeleyone B, followed by rearrangement of the A/B-ring to form the cycloheptadiene moiety in berkeleydione. Berkeleydione serves as the key intermediate for the biosynthesis of paraherquonin as well as many other meroterpenoids. The cytochrome P450 monooxygenases prhB, prhD, and prhN, as well as the isomerase prhC, are probably involved in the late stage of paraherquonin biosynthesis, after the production of berkeleydione. Especially prhC might be a multifunctional enzyme that catalyzes the D-ring expansion via intramolecular methoxy rearrangement, as well as the hydrolysis of the expanded D-ring. This Penicillium brasilianum protein is FAD-binding monooxygenase prhK.